Reading from the N-terminus, the 280-residue chain is Elongation factor Ts (280 aa).

Residues 79-82 are involved in Mg(2+) ion dislocation from EF-Tu; that stretch reads TDFV.

This sequence belongs to the EF-Ts family.

The protein resides in the cytoplasm. In terms of biological role, associates with the EF-Tu.GDP complex and induces the exchange of GDP to GTP. It remains bound to the aminoacyl-tRNA.EF-Tu.GTP complex up to the GTP hydrolysis stage on the ribosome. In Treponema denticola (strain ATCC 35405 / DSM 14222 / CIP 103919 / JCM 8153 / KCTC 15104), this protein is Elongation factor Ts.